The primary structure comprises 250 residues: 3-deoxy-manno-octulosonate cytidylyltransferase (250 aa).

Belongs to the KdsB family.

The protein resides in the cytoplasm. The enzyme catalyses 3-deoxy-alpha-D-manno-oct-2-ulosonate + CTP = CMP-3-deoxy-beta-D-manno-octulosonate + diphosphate. It functions in the pathway nucleotide-sugar biosynthesis; CMP-3-deoxy-D-manno-octulosonate biosynthesis; CMP-3-deoxy-D-manno-octulosonate from 3-deoxy-D-manno-octulosonate and CTP: step 1/1. Its pathway is bacterial outer membrane biogenesis; lipopolysaccharide biosynthesis. Activates KDO (a required 8-carbon sugar) for incorporation into bacterial lipopolysaccharide in Gram-negative bacteria. In Actinobacillus pleuropneumoniae serotype 7 (strain AP76), this protein is 3-deoxy-manno-octulosonate cytidylyltransferase.